Reading from the N-terminus, the 382-residue chain is SOX domain-containing protein dichaete (382 aa).

2 disordered regions span residues 53–142 (GGSP…EGHI) and 346–382 (YPSSSTSSPGSSPGTITPNGMDGSMDSALRRPVPVLY). Gly residues predominate over residues 60–69 (AGQGVNGSSG). Residues 96-123 (NSSIGSAGSLGSQSSLGSNGSGLNSSSG) show a composition bias toward low complexity. The segment at residues 142–210 (IKRPMNAFMV…LHMKEHPDYK (69 aa)) is a DNA-binding region (HMG box). Over residues 347–360 (PSSSTSSPGSSPGT) the composition is skewed to low complexity.

In terms of tissue distribution, initially expressed in a pair-rule-like pattern which is rapidly replaced by strong neuroectoderm expression.

The protein localises to the nucleus. Functionally, essential for segmentation and CNS development. May modulate the actions of other transcription factors, including gap and pair-rule proteins. The chain is SOX domain-containing protein dichaete (D) from Drosophila melanogaster (Fruit fly).